Consider the following 312-residue polypeptide: tRNA dimethylallyltransferase (312 aa).

Residue 15 to 22 (GPTAAGKS) participates in ATP binding. 17-22 (TAAGKS) serves as a coordination point for substrate. An interaction with substrate tRNA region spans residues 40-43 (DSMQ).

This sequence belongs to the IPP transferase family. Monomer. Mg(2+) is required as a cofactor.

It catalyses the reaction adenosine(37) in tRNA + dimethylallyl diphosphate = N(6)-dimethylallyladenosine(37) in tRNA + diphosphate. Catalyzes the transfer of a dimethylallyl group onto the adenine at position 37 in tRNAs that read codons beginning with uridine, leading to the formation of N6-(dimethylallyl)adenosine (i(6)A). The sequence is that of tRNA dimethylallyltransferase from Streptomyces griseus subsp. griseus (strain JCM 4626 / CBS 651.72 / NBRC 13350 / KCC S-0626 / ISP 5235).